We begin with the raw amino-acid sequence, 397 residues long: Arginine biosynthesis bifunctional protein ArgJ (397 aa).

The substrate site is built by Thr-147, Lys-173, Thr-184, Glu-270, Asn-392, and Thr-397. The Nucleophile role is filled by Thr-184.

It belongs to the ArgJ family. As to quaternary structure, heterotetramer of two alpha and two beta chains.

It localises to the cytoplasm. The enzyme catalyses N(2)-acetyl-L-ornithine + L-glutamate = N-acetyl-L-glutamate + L-ornithine. It carries out the reaction L-glutamate + acetyl-CoA = N-acetyl-L-glutamate + CoA + H(+). It functions in the pathway amino-acid biosynthesis; L-arginine biosynthesis; L-ornithine and N-acetyl-L-glutamate from L-glutamate and N(2)-acetyl-L-ornithine (cyclic): step 1/1. Its pathway is amino-acid biosynthesis; L-arginine biosynthesis; N(2)-acetyl-L-ornithine from L-glutamate: step 1/4. Catalyzes two activities which are involved in the cyclic version of arginine biosynthesis: the synthesis of N-acetylglutamate from glutamate and acetyl-CoA as the acetyl donor, and of ornithine by transacetylation between N(2)-acetylornithine and glutamate. This is Arginine biosynthesis bifunctional protein ArgJ from Streptococcus thermophilus (strain CNRZ 1066).